Consider the following 480-residue polypeptide: Sensor histidine kinase CusS (480 aa).

Over 1–15 (MVSKPFQRPFSLATR) the chain is Cytoplasmic. Residues 16 to 36 (LTFFISLATIAAFFAFAWIMI) form a helical membrane-spanning segment. Over 37–186 (HSVKVHFAEQ…LHYINDLMNK (150 aa)) the chain is Periplasmic. A helical membrane pass occupies residues 187–207 (LIMTASVISILIVFIVLLAVH). An HAMP domain is found at 207-260 (HKGHAPIRSVSRQIQNITSKDLDVRLDPQTVPIELEQLVLSFNHMIERIEDVFT). Residues 208–480 (KGHAPIRSVS…GTRFVIILPA (273 aa)) are Cytoplasmic-facing. Residues 268-480 (DIAHEIRTPI…GTRFVIILPA (213 aa)) enclose the Histidine kinase domain. Histidine 271 is modified (phosphohistidine; by autocatalysis).

Autophosphorylated.

It is found in the cell inner membrane. It catalyses the reaction ATP + protein L-histidine = ADP + protein N-phospho-L-histidine.. Functionally, member of the two-component regulatory system CusS/CusR involved in response to copper and silver. Acts as a copper/silver ion sensor. Activates CusR by phosphorylation. The chain is Sensor histidine kinase CusS (cusS) from Escherichia coli O6:H1 (strain CFT073 / ATCC 700928 / UPEC).